Consider the following 177-residue polypeptide: Large ribosomal subunit protein uL6 (177 aa).

It belongs to the universal ribosomal protein uL6 family. Part of the 50S ribosomal subunit.

This protein binds to the 23S rRNA, and is important in its secondary structure. It is located near the subunit interface in the base of the L7/L12 stalk, and near the tRNA binding site of the peptidyltransferase center. This Tolumonas auensis (strain DSM 9187 / NBRC 110442 / TA 4) protein is Large ribosomal subunit protein uL6.